We begin with the raw amino-acid sequence, 109 residues long: MRGALLVLALLVTQALGVKMAETCPIFYDVFFAVANGNELLLDLSLTKVNATEPERTAMKKIQDCYVENGLISRVLDGLVMTTISSSKDCMGEAVQNTVEDLKLNTLGR.

The first 17 residues, 1–17 (MRGALLVLALLVTQALG), serve as a signal peptide directing secretion. N50 is a glycosylation site (N-linked (GlcNAc...) asparagine).

It belongs to the secretoglobin family. As to quaternary structure, heterotetramer composed of two non-covalently linked disulfide-linked heterodimer of chains 1 and 2. As to expression, the long form is preferentially expressed in the salivary gland, while the short form is preferentially expressed in the skin.

It is found in the secreted. The sequence is that of Major allergen I polypeptide chain 2 (CH2) from Felis catus (Cat).